We begin with the raw amino-acid sequence, 378 residues long: Putative glycosyltransferase ORF378 (378 aa).

This sequence belongs to the glycosyltransferase group 1 family. Glycosyltransferase 4 subfamily.

This Acidianus sp. F28 (AFV-2) protein is Putative glycosyltransferase ORF378.